Here is a 975-residue protein sequence, read N- to C-terminus: Glycine dehydrogenase (decarboxylating) (975 aa).

Position 723 is an N6-(pyridoxal phosphate)lysine (K723).

Belongs to the GcvP family. In terms of assembly, the glycine cleavage system is composed of four proteins: P, T, L and H. Pyridoxal 5'-phosphate is required as a cofactor.

It catalyses the reaction N(6)-[(R)-lipoyl]-L-lysyl-[glycine-cleavage complex H protein] + glycine + H(+) = N(6)-[(R)-S(8)-aminomethyldihydrolipoyl]-L-lysyl-[glycine-cleavage complex H protein] + CO2. Its function is as follows. The glycine cleavage system catalyzes the degradation of glycine. The P protein binds the alpha-amino group of glycine through its pyridoxal phosphate cofactor; CO(2) is released and the remaining methylamine moiety is then transferred to the lipoamide cofactor of the H protein. In Burkholderia thailandensis (strain ATCC 700388 / DSM 13276 / CCUG 48851 / CIP 106301 / E264), this protein is Glycine dehydrogenase (decarboxylating).